A 358-amino-acid polypeptide reads, in one-letter code: Dual-specificity RNA methyltransferase RlmN (358 aa).

Glutamate 91 functions as the Proton acceptor in the catalytic mechanism. The 236-residue stretch at 102–337 folds into the Radical SAM core domain; sequence GNIRITQCLS…TILRKSKGQD (236 aa). Cysteine 109 and cysteine 342 form a disulfide bridge. The [4Fe-4S] cluster site is built by cysteine 116, cysteine 120, and cysteine 123. S-adenosyl-L-methionine contacts are provided by residues 169 to 170, serine 201, 223 to 225, and asparagine 299; these read GE and SLH. Cysteine 342 serves as the catalytic S-methylcysteine intermediate.

The protein belongs to the radical SAM superfamily. RlmN family. [4Fe-4S] cluster serves as cofactor.

The protein resides in the cytoplasm. It carries out the reaction adenosine(2503) in 23S rRNA + 2 reduced [2Fe-2S]-[ferredoxin] + 2 S-adenosyl-L-methionine = 2-methyladenosine(2503) in 23S rRNA + 5'-deoxyadenosine + L-methionine + 2 oxidized [2Fe-2S]-[ferredoxin] + S-adenosyl-L-homocysteine. The enzyme catalyses adenosine(37) in tRNA + 2 reduced [2Fe-2S]-[ferredoxin] + 2 S-adenosyl-L-methionine = 2-methyladenosine(37) in tRNA + 5'-deoxyadenosine + L-methionine + 2 oxidized [2Fe-2S]-[ferredoxin] + S-adenosyl-L-homocysteine. Specifically methylates position 2 of adenine 2503 in 23S rRNA and position 2 of adenine 37 in tRNAs. m2A2503 modification seems to play a crucial role in the proofreading step occurring at the peptidyl transferase center and thus would serve to optimize ribosomal fidelity. This chain is Dual-specificity RNA methyltransferase RlmN, found in Lawsonia intracellularis (strain PHE/MN1-00).